Reading from the N-terminus, the 560-residue chain is Arginine--tRNA ligase (560 aa).

The 'HIGH' region signature appears at 121-131; that stretch reads PNIAKPFSMGH.

Belongs to the class-I aminoacyl-tRNA synthetase family. Monomer.

It is found in the cytoplasm. The enzyme catalyses tRNA(Arg) + L-arginine + ATP = L-arginyl-tRNA(Arg) + AMP + diphosphate. The sequence is that of Arginine--tRNA ligase from Exiguobacterium sibiricum (strain DSM 17290 / CCUG 55495 / CIP 109462 / JCM 13490 / 255-15).